Reading from the N-terminus, the 709-residue chain is MAAVSNESQNPVDPGSSKLQFAPFSSALNVGFWHELTQKKLNEYRLDETPKVIKGYYYNGDPSGFPARLTLEYSAFDINASIPARCCPAFGTLYNTNTFETFKSCDKKSLLEKEANEIWESIKSGAALENPMLLNRFLLLTFADLKKYHFYYWFCYPALCFPDGIHVIQKPVCLGDRFSLNQIQALQKAYDELCQTEGVTAFPYFLIKYHDNSVVVSPLKKWDGFFQDQGGKVTVGVYDPCNLSHYPGWPLRNFLILASHKWGNILQSIEVLCFRDRTMQGVRDITHSIIFEIKLPQGAFGPDCPKAVGWEKNQKGGMGPRVVNLSECMDPKRLAESSVDLNLKLMCWRLVPTLDLEKIVSAKCLLLGAGTLGCSVARTLMGWGVRKITFVDNARISYSNPVRQPLYEFEDCLSGGKPKALAAAERLQKIFPGVNSEGYNMSIPMPGHPVNFSEVTMAQARKDVATLEELIDAHDVVFLLMDTRESRWLPAVIAASKRKLVINAALGFDTFVVMRHGLKKPKQQETGNACFSTAPGPSDLLGSSLFSNIPGYKLGCYFCNDVVAPGDSTRDRTLDQQCTVSRPGLAMIAGALAVELMVSVLQHPEGGYAVASSSDDRMNEPPTSLGLVPHQIRGFLSRFDNVLPVSLAFDKCTACSPKVLDQYEREGFNFLAKVFNSSHSFLEDLTGLTLLHQETQAAEIWDMSDDETV.

The active-site Glycyl thioester intermediate is the C578.

The protein belongs to the ATG7 family. As to quaternary structure, homodimer. Interacts with ATG3 and ATG12. The complex, composed of ATG3 and ATG7, plays a role in the conjugation of ATG12 to ATG5.

Its subcellular location is the cytoplasm. The protein resides in the preautophagosomal structure. Its function is as follows. E1-like activating enzyme involved in the 2 ubiquitin-like systems required for cytoplasm to vacuole transport (Cvt) and autophagy. Activates ATG12 for its conjugation with ATG5 as well as the ATG8 family proteins for their conjugation with phosphatidylethanolamine. Both systems are needed for the ATG8 association to Cvt vesicles and autophagosomes membranes. Required for autophagic death induced by caspase-8 inhibition. Facilitates LC3-I lipidation with phosphatidylethanolamine to form LC3-II which is found on autophagosomal membranes. Required for mitophagy which contributes to regulate mitochondrial quantity and quality by eliminating the mitochondria to a basal level to fulfill cellular energy requirements and preventing excess ROS production. Modulates p53/TP53 activity to regulate cell cycle and survival during metabolic stress. Plays a role in regulating the liver clock and glucose metabolism by mediating the autophagic degradation of CRY1 (clock repressor) in a time-dependent manner. This Gallus gallus (Chicken) protein is Ubiquitin-like modifier-activating enzyme ATG7 (ATG7).